The following is a 686-amino-acid chain: ATP-dependent zinc metalloprotease FtsH 1 (686 aa).

Over 1–33 the chain is Cytoplasmic; sequence MCFCIVSSPEAMHSNADSPSSGPGLQPVWTTLR. A helical membrane pass occupies residues 34 to 54; sequence SPYVFWIGGAILLALLVHLGI. The Periplasmic portion of the chain corresponds to 55–164; that stretch reads KWQQASAPVR…TFAATQESDW (110 aa). Residues 165 to 185 traverse the membrane as a helical segment; the sequence is VGTLLLWGLPLGLIVGIWLFF. The Cytoplasmic segment spans residues 186-686; the sequence is MRRMATGGRE…AEGASPSSQG (501 aa). Residue 257-264 participates in ATP binding; it reads GPPGTGKT. His479 provides a ligand contact to Zn(2+). Glu480 is an active-site residue. His483 and Asp555 together coordinate Zn(2+). Positions 661-686 are disordered; sequence YAWLKEGDGTSRNSASAEGASPSSQG. The span at 670–686 shows a compositional bias: polar residues; that stretch reads TSRNSASAEGASPSSQG.

This sequence in the central section; belongs to the AAA ATPase family. In the C-terminal section; belongs to the peptidase M41 family. As to quaternary structure, homohexamer. It depends on Zn(2+) as a cofactor.

It localises to the cell inner membrane. Its function is as follows. Acts as a processive, ATP-dependent zinc metallopeptidase for both cytoplasmic and membrane proteins. Plays a role in the quality control of integral membrane proteins. This chain is ATP-dependent zinc metalloprotease FtsH 1, found in Salinibacter ruber (strain M8).